Reading from the N-terminus, the 241-residue chain is Folate receptor alpha (241 aa).

Residues 1–19 (MAWQMTQLLLLALVAAAWG) form the signal peptide. Cystine bridges form between cysteine 36-cysteine 64, cysteine 56-cysteine 104, cysteine 65-cysteine 108, cysteine 88-cysteine 174, cysteine 95-cysteine 145, cysteine 134-cysteine 208, cysteine 138-cysteine 188, and cysteine 151-cysteine 168. Asparagine 68 carries an N-linked (GlcNAc...) asparagine glycan. Residues aspartate 102, tyrosine 106, 123–127 (WRKER), 156–161 (HKGWNW), and serine 195 contribute to the folate site. A glycan (N-linked (GlcNAc...) asparagine) is linked at asparagine 160. Serine 234 is lipidated: GPI-anchor amidated serine. The propeptide at 235–241 (GSTPQGI) is removed in mature form.

The protein belongs to the folate receptor family. The secreted form is derived from the membrane-bound form either by cleavage of the GPI anchor, or/and by proteolysis catalyzed by a metalloprotease. Detected in milk (at protein level).

The protein localises to the cell membrane. Its subcellular location is the apical cell membrane. It localises to the basolateral cell membrane. It is found in the secreted. The protein resides in the cytoplasmic vesicle. The protein localises to the clathrin-coated vesicle. Its subcellular location is the endosome. Its function is as follows. Binds to folate and reduced folic acid derivatives and mediates delivery of 5-methyltetrahydrofolate and folate analogs into the interior of cells. Has high affinity for folate and folic acid analogs at neutral pH. Exposure to slightly acidic pH after receptor endocytosis triggers a conformation change that strongly reduces its affinity for folates and mediates their release. Required for normal embryonic development and normal cell proliferation. This chain is Folate receptor alpha (FOLR1), found in Bos taurus (Bovine).